A 459-amino-acid polypeptide reads, in one-letter code: mRNA-capping enzyme subunit alpha (459 aa).

The active-site N6-GMP-lysine intermediate is the lysine 70. The tract at residues methionine 415 to aspartate 459 is disordered. The span at proline 424–serine 444 shows a compositional bias: polar residues.

Belongs to the eukaryotic GTase family. As to quaternary structure, heterodimer. The mRNA-capping enzyme is composed of two separate chains alpha and beta, respectively a mRNA guanylyltransferase and an mRNA 5'-triphosphate monophosphatase.

Its subcellular location is the nucleus. The catalysed reaction is a 5'-end diphospho-ribonucleoside in mRNA + GTP + H(+) = a 5'-end (5'-triphosphoguanosine)-ribonucleoside in mRNA + diphosphate. In terms of biological role, second step of mRNA capping. Transfer of the GMP moiety of GTP to the 5'-diphosphate terminus of RNA via a covalent enzyme-GMP reaction intermediate. In Saccharomyces cerevisiae (strain ATCC 204508 / S288c) (Baker's yeast), this protein is mRNA-capping enzyme subunit alpha (CEG1).